The following is a 485-amino-acid chain: MTKTERYAQLRSMIPEMRRIKRIHFVGIGGAGMGGIAEVLVNEGYQISGSDIAINSVTERLASLGAKIIIGHQAQSVEQVDVVVVSTAINPQNPEIIAAKELRIPIVRRAEMLAELMRYRHGVAIAGTHGKTTTTSLIASVYGQADRDPTFVIGGLLNSAGTNARLGTSRYLIAEADESDASFLHLQPMVSVITNIEADHMDTYGGDFEKLKTTFVDFLHNLPFYGVAVMCIDDEVIREIMPRIGRQVVTYGFSEEADVQAINFAQNGHQSSFTVKRHGKDNVDIVLNLPGEHNVLNALAAIAVASEDDIDDSAIVQALAEFEGIGRRFQHLGEFETPNGSVMLVDDYGHHPSEVLATIKAARAGWPDKRLVMAYQPHRYSRTRDLYEDFVDVLSQVDCLLLLDVYAAGEAPIPGADGRALCRSIRLRGQIDPIFIASPDQLAAVLPDVLQHGDLFMTQGAGNIGALSKELAQSNLGCKVLVEEQ.

127–133 is an ATP binding site; sequence GTHGKTT.

The protein belongs to the MurCDEF family.

The protein localises to the cytoplasm. It carries out the reaction UDP-N-acetyl-alpha-D-muramate + L-alanine + ATP = UDP-N-acetyl-alpha-D-muramoyl-L-alanine + ADP + phosphate + H(+). Its pathway is cell wall biogenesis; peptidoglycan biosynthesis. Cell wall formation. This Shewanella frigidimarina (strain NCIMB 400) protein is UDP-N-acetylmuramate--L-alanine ligase.